Consider the following 144-residue polypeptide: Transcriptional regulator SlyA (144 aa).

Residues 2-135 (ESPLGSDLAR…LSNMIAKLEK (134 aa)) form the HTH marR-type domain. A DNA-binding region (H-T-H motif) is located at residues 49 to 72 (QIQLAKAIGIEQPSLVRTLDQLEE).

It belongs to the SlyA family. Homodimer.

Its function is as follows. Transcription regulator that can specifically activate or repress expression of target genes. This Sodalis glossinidius (strain morsitans) protein is Transcriptional regulator SlyA.